Reading from the N-terminus, the 698-residue chain is Polyribonucleotide nucleotidyltransferase (698 aa).

Positions 488 and 494 each coordinate Mg(2+). Positions 555–614 (PRLLTIRIDPDKIRDVIGKGGATIRALTEETGTTIDISDDGKVTIASADKAAADEARRRI) constitute a KH domain. The S1 motif domain occupies 624–692 (GTVYEGKVSK…RQGRIRLSMK (69 aa)).

This sequence belongs to the polyribonucleotide nucleotidyltransferase family. In terms of assembly, component of the RNA degradosome, which is a multiprotein complex involved in RNA processing and mRNA degradation. Mg(2+) serves as cofactor.

Its subcellular location is the cytoplasm. It carries out the reaction RNA(n+1) + phosphate = RNA(n) + a ribonucleoside 5'-diphosphate. Involved in mRNA degradation. Catalyzes the phosphorolysis of single-stranded polyribonucleotides processively in the 3'- to 5'-direction. The chain is Polyribonucleotide nucleotidyltransferase from Alkalilimnicola ehrlichii (strain ATCC BAA-1101 / DSM 17681 / MLHE-1).